A 262-amino-acid polypeptide reads, in one-letter code: Glutamate racemase (262 aa).

Residues 5–6 (DS) and 37–38 (YG) each bind substrate. Residue Cys69 is the Proton donor/acceptor of the active site. Substrate is bound at residue 70 to 71 (NT). The Proton donor/acceptor role is filled by Cys181. 182–183 (TH) is a substrate binding site.

Belongs to the aspartate/glutamate racemases family.

The enzyme catalyses L-glutamate = D-glutamate. It participates in cell wall biogenesis; peptidoglycan biosynthesis. Provides the (R)-glutamate required for cell wall biosynthesis. This chain is Glutamate racemase, found in Buchnera aphidicola subsp. Acyrthosiphon pisum (strain APS) (Acyrthosiphon pisum symbiotic bacterium).